The chain runs to 347 residues: Ribosomal RNA large subunit methyltransferase M (347 aa).

S-adenosyl-L-methionine contacts are provided by residues Ser-184, 217–220 (APGG), Asp-236, Asp-256, and Asp-272. Residue Lys-301 is the Proton acceptor of the active site.

This sequence belongs to the class I-like SAM-binding methyltransferase superfamily. RNA methyltransferase RlmE family. RlmM subfamily. In terms of assembly, monomer.

The protein resides in the cytoplasm. It catalyses the reaction cytidine(2498) in 23S rRNA + S-adenosyl-L-methionine = 2'-O-methylcytidine(2498) in 23S rRNA + S-adenosyl-L-homocysteine + H(+). In terms of biological role, catalyzes the 2'-O-methylation at nucleotide C2498 in 23S rRNA. The sequence is that of Ribosomal RNA large subunit methyltransferase M from Xanthomonas campestris pv. campestris (strain 8004).